A 504-amino-acid polypeptide reads, in one-letter code: MTPVVALVGRPNVGKSTLFNRLTRTRNALVADFPGLTRDRKYGHANIAGHDFIVIDTGGIDGTEEGVEEKMAEQSLLAIKEADVVLFLVDARAGLLPADVGIAQYLRQRNKTTVVVANKTDGIDADSHIAEFYQLGLGEVEPIAAAQGRGVTQLIEQVLAPLAEKLEAQAVDSDENVADDEQDEWDSDFDFDNEEDTALLDEALEEDQEETDDKNIKIAIVGRPNVGKSTLTNRILGEERVVVYDMPGTTRDSIYIPMERDGQQYTIIDTAGVRKRGKVHLAVEKFSVIKTLQAIQDANVVLLTIDARDGVSDQDLSLLGFILNAGKSLVIVVNKWDGLSQDIKDNVKSELDRRLDFIDFARVHFISALHGSGVGNLFSSIQEAYQCATKKMTTSMLTRILQLAMDDHQPPLVNGRRVKLKYAHPGGYNPPIIVIHGNQIEKLPDSYKRYLSNYFRKSLKIIGSPIRVLFQEGNNPFAGKKNKLTPSQLRKRKRLMKFIKKSKR.

Residues 3-166 (PVVALVGRPN…QVLAPLAEKL (164 aa)) enclose the EngA-type G 1 domain. GTP-binding positions include 9–16 (GRPNVGKS), 56–60 (DTGGI), and 118–121 (NKTD). Positions 171 to 190 (VDSDENVADDEQDEWDSDFD) are disordered. Positions 172 to 190 (DSDENVADDEQDEWDSDFD) are enriched in acidic residues. The EngA-type G 2 domain occupies 216–389 (IKIAIVGRPN…SIQEAYQCAT (174 aa)). Residues 222–229 (GRPNVGKS), 269–273 (DTAGV), and 334–337 (NKWD) contribute to the GTP site. The KH-like domain maps to 390-474 (KKMTTSMLTR…PIRVLFQEGN (85 aa)).

It belongs to the TRAFAC class TrmE-Era-EngA-EngB-Septin-like GTPase superfamily. EngA (Der) GTPase family. Associates with the 50S ribosomal subunit.

In terms of biological role, GTPase that plays an essential role in the late steps of ribosome biogenesis. The protein is GTPase Der of Glaesserella parasuis serovar 5 (strain SH0165) (Haemophilus parasuis).